The following is a 378-amino-acid chain: Acetylornithine deacetylase (378 aa).

Histidine 76 serves as a coordination point for Zn(2+). Aspartate 78 is an active-site residue. A Zn(2+)-binding site is contributed by aspartate 108. Residue glutamate 140 is part of the active site. Zn(2+)-binding residues include glutamate 141, glutamate 165, and histidine 351.

The protein belongs to the peptidase M20A family. ArgE subfamily. In terms of assembly, homodimer. Requires Zn(2+) as cofactor. Co(2+) serves as cofactor. The cofactor is glutathione.

It is found in the cytoplasm. It carries out the reaction N(2)-acetyl-L-ornithine + H2O = L-ornithine + acetate. Its pathway is amino-acid biosynthesis; L-arginine biosynthesis; L-ornithine from N(2)-acetyl-L-ornithine (linear): step 1/1. Functionally, catalyzes the hydrolysis of the amide bond of N(2)-acetylated L-amino acids. Cleaves the acetyl group from N-acetyl-L-ornithine to form L-ornithine, an intermediate in L-arginine biosynthesis pathway, and a branchpoint in the synthesis of polyamines. The sequence is that of Acetylornithine deacetylase from Vibrio atlanticus (strain LGP32) (Vibrio splendidus (strain Mel32)).